Reading from the N-terminus, the 236-residue chain is Rho-related GTP-binding protein RhoV (236 aa).

The segment at 1 to 27 (MPPRELSEAESSPLRSPTPPPGRGSAS) is disordered. A Phosphoserine modification is found at serine 25. GTP-binding positions include 38-45 (GDGAVGKS), 85-89 (DTAGQ), and 143-146 (TQAD). Cysteine 234 is lipidated: S-palmitoyl cysteine.

It belongs to the small GTPase superfamily. Rho family. Interacts with PAK2. The cofactor is Mg(2+).

The protein localises to the cell membrane. It localises to the endosome membrane. Plays a role in the control of the actin cytoskeleton via activation of the JNK pathway. This Bos taurus (Bovine) protein is Rho-related GTP-binding protein RhoV.